We begin with the raw amino-acid sequence, 63 residues long: Metallothionein (63 aa).

Residues 1–30 (MDPQDCTCAAGDSCSCAGSCKCKNCRCRSC) are beta. The a divalent metal cation site is built by Cys-6, Cys-8, Cys-14, Cys-16, Cys-20, Cys-22, Cys-25, Cys-27, Cys-30, Cys-34, Cys-35, Cys-37, Cys-38, Cys-42, Cys-45, Cys-49, Cys-51, Cys-59, Cys-61, and Cys-62. Residues 31-63 (RKSCCSCCPAGCNNCAKGCVCKEPASSKCSCCH) are alpha.

The protein belongs to the metallothionein superfamily. Type 1 family.

Functionally, metallothioneins have a high content of cysteine residues that bind various heavy metals. This Anas platyrhynchos (Mallard) protein is Metallothionein.